Reading from the N-terminus, the 506-residue chain is ATP synthase subunit alpha, chloroplastic (506 aa).

ATP is bound at residue 170 to 177; the sequence is GDRQTGKT.

The protein belongs to the ATPase alpha/beta chains family. In terms of assembly, F-type ATPases have 2 components, CF(1) - the catalytic core - and CF(0) - the membrane proton channel. CF(1) has five subunits: alpha(3), beta(3), gamma(1), delta(1), epsilon(1). CF(0) has four main subunits: a, b, b' and c.

It is found in the plastid. Its subcellular location is the chloroplast thylakoid membrane. It carries out the reaction ATP + H2O + 4 H(+)(in) = ADP + phosphate + 5 H(+)(out). Functionally, produces ATP from ADP in the presence of a proton gradient across the membrane. The alpha chain is a regulatory subunit. The chain is ATP synthase subunit alpha, chloroplastic from Chlorokybus atmophyticus (Soil alga).